The primary structure comprises 627 residues: Chaperone protein DnaK (627 aa).

T197 carries the post-translational modification Phosphothreonine; by autocatalysis. The segment covering 598-611 (AYAKEQGGQQGAAD) has biased composition (low complexity). The segment at 598–627 (AYAKEQGGQQGAADAGKKADDDDVIDAEVE) is disordered. Acidic residues predominate over residues 618–627 (DDDVIDAEVE).

The protein belongs to the heat shock protein 70 family.

Its function is as follows. Acts as a chaperone. In Sulfurovum sp. (strain NBC37-1), this protein is Chaperone protein DnaK.